The following is a 204-amino-acid chain: Ribonuclease HII (204 aa).

Positions Glu16–Lys204 constitute an RNase H type-2 domain. 3 residues coordinate a divalent metal cation: Asp22, Glu23, and Asp120.

The protein belongs to the RNase HII family. It depends on Mn(2+) as a cofactor. Mg(2+) serves as cofactor.

It localises to the cytoplasm. The catalysed reaction is Endonucleolytic cleavage to 5'-phosphomonoester.. In terms of biological role, endonuclease that specifically degrades the RNA of RNA-DNA hybrids. This is Ribonuclease HII from Alkaliphilus metalliredigens (strain QYMF).